The primary structure comprises 2002 residues: [F-actin]-monooxygenase MICAL3 (2002 aa).

The interval 2-494 is monooxygenase domain; it reads EERKHETMNP…RHLYDTGETK (493 aa). Residues cysteine 97, 116–118, 123–125, phenylalanine 183, tyrosine 298, and aspartate 398 contribute to the FAD site; these read EKR and RNN. The Calponin-homology (CH) domain maps to 518–624; the sequence is VARSSKLLGW…YLTQFYEMFK (107 aa). A Phosphoserine modification is found at serine 649. Positions 658–706 are disordered; it reads GQTISRKRSPKDKKEKDLDGAGKRRKTSQSEEEEAPRGHRGERPTLVST. The Nuclear localization signal motif lies at 663–684; the sequence is RKRSPKDKKEKDLDGAGKRRKT. The segment covering 669–679 has biased composition (basic and acidic residues); the sequence is DKKEKDLDGAG. Phosphoserine is present on residues serine 685 and serine 687. The region spanning 762–824 is the LIM zinc-binding domain; that stretch reads DTCYFCQKRV…KPHYCYRLSG (63 aa). 8 residues coordinate Zn(2+): cysteine 764, cysteine 767, histidine 785, cysteine 788, cysteine 791, cysteine 794, cysteine 814, and histidine 817. A disordered region spans residues 835 to 883; the sequence is PLSGKEAKGPLQDGATTDANGRANAVASSTERTPGSGVNGLEEPSIAKR. Phosphothreonine is present on threonine 887. Disordered stretches follow at residues 907–1313, 1335–1776, and 1791–1821; these read QEVP…SPLA, RRSL…GKHR, and LSFS…TYTE. Over residues 938–950 the composition is skewed to acidic residues; the sequence is SEMEEEGEEEEEE. Serine 977 carries the post-translational modification Phosphoserine. Over residues 991 to 1017 the composition is skewed to acidic residues; sequence NEEEEEEEEEYEEEEEEDYDEEEEESS. Residues 1041–1054 show a composition bias toward basic and acidic residues; it reads HWTHIREREEEERM. The segment covering 1055–1066 has biased composition (low complexity); sequence APASESSASGAP. Residues 1068–1102 show a composition bias toward acidic residues; the sequence is DENDLEEDVDSEPAEIEGEAAEDGDPGDTGAELDD. Serine 1134, serine 1143, serine 1160, and serine 1192 each carry phosphoserine. Over residues 1150–1163 the composition is skewed to polar residues; that stretch reads GPSQATSPIRSPQE. A compositionally biased stretch (basic and acidic residues) spans 1191–1218; that stretch reads KSPEERLFPEPLLPKEKPKADAPSDLKA. A compositionally biased stretch (pro residues) spans 1239–1258; the sequence is PGSPQPQPPVAASTPPPSPL. Composition is skewed to polar residues over residues 1268 to 1280 and 1288 to 1302; these read TEAT…QSPI and KTST…QSQS. Serine 1274 bears the Phosphoserine mark. Phosphothreonine is present on threonine 1276. Serine 1278 carries the post-translational modification Phosphoserine. Phosphoserine occurs at positions 1310 and 1337. Residue threonine 1341 is modified to Phosphothreonine. Phosphoserine occurs at positions 1371 and 1384. Basic and acidic residues predominate over residues 1407 to 1422; sequence PSDRELRSAQEERREL. Positions 1423–1435 are enriched in low complexity; sequence SSSSGLGLHGSSS. The residue at position 1433 (serine 1433) is a Phosphoserine. A compositionally biased stretch (polar residues) spans 1436–1451; it reads NMKTLGSQSFNTSDSA. Threonine 1454 carries the phosphothreonine modification. The segment covering 1456 to 1467 has biased composition (pro residues); that stretch reads PSSPPPPPPPGE. Residues 1516-1530 show a composition bias toward acidic residues; the sequence is SVEEIPFADDVEDTY. Residues 1588–1604 show a composition bias toward basic and acidic residues; it reads EAKELAEERMRAREKSV. Serine 1649 is modified (phosphoserine). A Phosphothreonine modification is found at threonine 1651. Over residues 1657–1668 the composition is skewed to basic and acidic residues; the sequence is GSEEPTLKHEAT. A compositionally biased stretch (low complexity) spans 1674-1694; it reads SPPSDSGGPDGSFTSSEGSSG. Over residues 1695–1713 the composition is skewed to basic residues; that stretch reads KSKKRSSLFSPRRNKKEKK. Residues serine 1701 and serine 1704 each carry the phosphoserine modification. Positions 1760-1769 are enriched in polar residues; that stretch reads CPSTPSSGAT. A compositionally biased stretch (basic and acidic residues) spans 1804-1820; that stretch reads VLEKSSQKSRREPRTYT. Residues 1821 to 1992 are a coiled coil; sequence EEELNAKLTR…EEDKDLEAAM (172 aa). Positions 1841–1990 constitute a bMERB domain; it reads KQEELKRLHR…EREEDKDLEA (150 aa). The residue at position 1912 (serine 1912) is a Phosphoserine.

It belongs to the Mical family. In terms of assembly, interacts with RAB1B, RAB8A, RAB10, RAB13 and RAB15 (in their GTP-bound forms); binding to RAB1B is of low affinity compared to other Rab proteins; at least in case of RAB8A can bind 2 molecules of RAB8A simultaneously through a high and a low affinity binding site, respectively. Interacts with ERC1 and RAB8A; may bridge ERC1 with RAB8A. Interacts with KIF23 and ERC1; enhances the interaction between KIF23 and ERC1. Interacts with NINL isoform 2. Requires FAD as cofactor. In terms of tissue distribution, ubiquitous.

The protein localises to the cytoplasm. It is found in the cell cortex. Its subcellular location is the cytoskeleton. The protein resides in the nucleus. It localises to the midbody. The protein localises to the spindle. It is found in the cilium basal body. It catalyses the reaction L-methionyl-[F-actin] + NADPH + O2 + H(+) = L-methionyl-(R)-S-oxide-[F-actin] + NADP(+) + H2O. Its function is as follows. Monooxygenase that promotes depolymerization of F-actin by mediating oxidation of specific methionine residues on actin to form methionine-sulfoxide, resulting in actin filament disassembly and preventing repolymerization. In the absence of actin, it also functions as a NADPH oxidase producing H(2)O(2). Seems to act as Rab effector protein and plays a role in vesicle trafficking. Involved in exocytic vesicles tethering and fusion: the monooxygenase activity is required for this process and implicates RAB8A associated with exocytotic vesicles. Required for cytokinesis. Contributes to stabilization and/or maturation of the intercellular bridge independently of its monooxygenase activity. Promotes recruitment of Rab8 and ERC1 to the intercellular bridge, and together these proteins are proposed to function in timely abscission. The chain is [F-actin]-monooxygenase MICAL3 (MICAL3) from Homo sapiens (Human).